Consider the following 297-residue polypeptide: N-acetylneuraminate lyase (297 aa).

Residues serine 47 and threonine 48 each coordinate aceneuramate. Tyrosine 137 functions as the Proton donor in the catalytic mechanism. Lysine 165 (schiff-base intermediate with substrate) is an active-site residue. Positions 167, 189, 191, 192, and 208 each coordinate aceneuramate.

It belongs to the DapA family. NanA subfamily. In terms of assembly, homotetramer.

The protein localises to the cytoplasm. The enzyme catalyses aceneuramate = aldehydo-N-acetyl-D-mannosamine + pyruvate. It functions in the pathway amino-sugar metabolism; N-acetylneuraminate degradation; D-fructose 6-phosphate from N-acetylneuraminate: step 1/5. Its function is as follows. Catalyzes the reversible aldol cleavage of N-acetylneuraminic acid (sialic acid; Neu5Ac) to form pyruvate and N-acetylmannosamine (ManNAc) via a Schiff base intermediate. The chain is N-acetylneuraminate lyase from Enterobacter sp. (strain 638).